Here is a 286-residue protein sequence, read N- to C-terminus: 33 kDa chaperonin (286 aa).

Disulfide bonds link cysteine 233–cysteine 235 and cysteine 267–cysteine 270.

The protein belongs to the HSP33 family. Under oxidizing conditions two disulfide bonds are formed involving the reactive cysteines. Under reducing conditions zinc is bound to the reactive cysteines and the protein is inactive.

The protein localises to the cytoplasm. Functionally, redox regulated molecular chaperone. Protects both thermally unfolding and oxidatively damaged proteins from irreversible aggregation. Plays an important role in the bacterial defense system toward oxidative stress. In Histophilus somni (strain 129Pt) (Haemophilus somnus), this protein is 33 kDa chaperonin.